Here is an 85-residue protein sequence, read N- to C-terminus: MRKYNPRKIKNKVNIPIVLHKANSTIPFVQGTVDYKNVALLRKYISAEGKILSRRLTRLTSKQQRHISTAIKTARIAGLLPFINQ.

Belongs to the bacterial ribosomal protein bS18 family. In terms of assembly, part of the 30S ribosomal subunit.

Its subcellular location is the plastid. It is found in the chloroplast. This is Small ribosomal subunit protein bS18c from Tupiella akineta (Green alga).